Consider the following 590-residue polypeptide: MTLHNNNTTSPLFPNISSSWIHGPSDAGLPPGTVTHFGSYNISQAAGNFSSPNGTTSDPLGGHTIWQVVFIAFLTGILALVTIIGNILVIVAFKVNKQLKTVNNYFLLSLACADLIIGVISMNLFTTYIIMNRWALGNLACDLWLSIDYVASNASVMNLLVISFDRYFSITRPLTYRAKRTTKRAGVMIGLAWVISFILWAPAILFWQYFVGKRTVPPGECFIQFLSEPTITFGTAIAAFYMPVTIMTILYWRIYKETEKRTKELAGLQASGTEAEAENFVHPTGSSRSCSSYELQQQSLKRSARRKYGRCHFWFTTKSWKPSAEQMDQDHSSSDSWNNNDAAASLENSASSDEEDIGSETRAIYSIVLKLPGHSTILNSTKLPSSDNLQVPEEELGTVDLERKASKLQAQKSMDDGGSFQKSFSKLPIQLESAVDTAKASDVNSSVGKTTATLPLSFKEATLAKRFALKTRSQITKRKRMSLIKEKKAAQTLSAILLAFIITWTPYNIMVLVNTFCDSCIPKTYWNLGYWLCYINSTVNPVCYALCNKTFRTTFKMLLLCQCDKRKRRKQQYQQRQSVIFHKRVPEQAL.

Topologically, residues 1–67 (MTLHNNNTTS…DPLGGHTIWQ (67 aa)) are extracellular. Residues Asn-6, Asn-7, Asn-15, Asn-41, Asn-48, and Asn-53 are each glycosylated (N-linked (GlcNAc...) asparagine). A helical membrane pass occupies residues 68 to 91 (VVFIAFLTGILALVTIIGNILVIV). At 92–104 (AFKVNKQLKTVNN) the chain is on the cytoplasmic side. The chain crosses the membrane as a helical span at residues 105–130 (YFLLSLACADLIIGVISMNLFTTYII). The Extracellular segment spans residues 131–142 (MNRWALGNLACD). Residues Cys-141 and Cys-221 are joined by a disulfide bond. A helical transmembrane segment spans residues 143-164 (LWLSIDYVASNASVMNLLVISF). Residues 165-184 (DRYFSITRPLTYRAKRTTKR) lie on the Cytoplasmic side of the membrane. The chain crosses the membrane as a helical span at residues 185–206 (AGVMIGLAWVISFILWAPAILF). The Extracellular segment spans residues 207–229 (WQYFVGKRTVPPGECFIQFLSEP). The helical transmembrane segment at 230–252 (TITFGTAIAAFYMPVTIMTILYW) threads the bilayer. Residues 253 to 491 (RIYKETEKRT…SLIKEKKAAQ (239 aa)) lie on the Cytoplasmic side of the membrane. A Basolateral sorting signal motif is present at residues 275-281 (AEAENFV). A disordered region spans residues 324 to 357 (AEQMDQDHSSSDSWNNNDAAASLENSASSDEEDI). Residues 334 to 345 (SDSWNNNDAAAS) show a composition bias toward low complexity. Ser-385 is subject to Phosphoserine. A helical transmembrane segment spans residues 492-514 (TLSAILLAFIITWTPYNIMVLVN). Topologically, residues 515–526 (TFCDSCIPKTYW) are extracellular. An intrachain disulfide couples Cys-517 to Cys-520. Residues 527-546 (NLGYWLCYINSTVNPVCYAL) traverse the membrane as a helical segment. Over 547 to 590 (CNKTFRTTFKMLLLCQCDKRKRRKQQYQQRQSVIFHKRVPEQAL) the chain is Cytoplasmic.

It belongs to the G-protein coupled receptor 1 family. Muscarinic acetylcholine receptor subfamily. CHRM3 sub-subfamily. As to quaternary structure, homodimer; the dimers can form tetramers. Interacts with NALCN. Interacts with TMEM147.

It localises to the cell membrane. It is found in the postsynaptic cell membrane. The protein localises to the basolateral cell membrane. The protein resides in the endoplasmic reticulum membrane. Its function is as follows. The muscarinic acetylcholine receptor mediates various cellular responses, including inhibition of adenylate cyclase, breakdown of phosphoinositides and modulation of potassium channels through the action of G proteins. Primary transducing effect is Pi turnover. The chain is Muscarinic acetylcholine receptor M3 (CHRM3) from Sus scrofa (Pig).